The sequence spans 91 residues: ATP synthase subunit c (91 aa).

2 consecutive transmembrane segments (helical) span residues 4–24 and 53–73; these read FTMC…GTGI and IGLA…LIIL.

The protein belongs to the ATPase C chain family. F-type ATPases have 2 components, F(1) - the catalytic core - and F(0) - the membrane proton channel. F(1) has five subunits: alpha(3), beta(3), gamma(1), delta(1), epsilon(1). F(0) has three main subunits: a(1), b(2) and c(10-14). The alpha and beta chains form an alternating ring which encloses part of the gamma chain. F(1) is attached to F(0) by a central stalk formed by the gamma and epsilon chains, while a peripheral stalk is formed by the delta and b chains.

Its subcellular location is the cell inner membrane. In terms of biological role, f(1)F(0) ATP synthase produces ATP from ADP in the presence of a proton or sodium gradient. F-type ATPases consist of two structural domains, F(1) containing the extramembraneous catalytic core and F(0) containing the membrane proton channel, linked together by a central stalk and a peripheral stalk. During catalysis, ATP synthesis in the catalytic domain of F(1) is coupled via a rotary mechanism of the central stalk subunits to proton translocation. Its function is as follows. Key component of the F(0) channel; it plays a direct role in translocation across the membrane. A homomeric c-ring of between 10-14 subunits forms the central stalk rotor element with the F(1) delta and epsilon subunits. The polypeptide is ATP synthase subunit c (Geotalea daltonii (strain DSM 22248 / JCM 15807 / FRC-32) (Geobacter daltonii)).